Here is a 263-residue protein sequence, read N- to C-terminus: Hydroxyacylglutathione hydrolase (263 aa).

Residues His-55, His-57, Asp-59, His-60, His-117, Asp-134, and His-172 each contribute to the Zn(2+) site.

It belongs to the metallo-beta-lactamase superfamily. Glyoxalase II family. Monomer. The cofactor is Zn(2+).

The enzyme catalyses an S-(2-hydroxyacyl)glutathione + H2O = a 2-hydroxy carboxylate + glutathione + H(+). It functions in the pathway secondary metabolite metabolism; methylglyoxal degradation; (R)-lactate from methylglyoxal: step 2/2. Its function is as follows. Thiolesterase that catalyzes the hydrolysis of S-D-lactoyl-glutathione to form glutathione and D-lactic acid. This is Hydroxyacylglutathione hydrolase from Shewanella baltica (strain OS155 / ATCC BAA-1091).